A 315-amino-acid polypeptide reads, in one-letter code: tRNA dimethylallyltransferase (315 aa).

Residue 18 to 25 (GPTASGKT) coordinates ATP. 20–25 (TASGKT) contacts substrate. 3 interaction with substrate tRNA regions span residues 43 to 46 (DSAL), 167 to 171 (QRLSR), and 248 to 253 (RCVGYR).

It belongs to the IPP transferase family. As to quaternary structure, monomer. The cofactor is Mg(2+).

The catalysed reaction is adenosine(37) in tRNA + dimethylallyl diphosphate = N(6)-dimethylallyladenosine(37) in tRNA + diphosphate. Catalyzes the transfer of a dimethylallyl group onto the adenine at position 37 in tRNAs that read codons beginning with uridine, leading to the formation of N6-(dimethylallyl)adenosine (i(6)A). The chain is tRNA dimethylallyltransferase from Pseudoalteromonas atlantica (strain T6c / ATCC BAA-1087).